The primary structure comprises 209 residues: NADH-quinone oxidoreductase subunit C (209 aa).

The protein belongs to the complex I 30 kDa subunit family. In terms of assembly, NDH-1 is composed of 14 different subunits. Subunits NuoB, C, D, E, F, and G constitute the peripheral sector of the complex.

It is found in the cell inner membrane. It carries out the reaction a quinone + NADH + 5 H(+)(in) = a quinol + NAD(+) + 4 H(+)(out). NDH-1 shuttles electrons from NADH, via FMN and iron-sulfur (Fe-S) centers, to quinones in the respiratory chain. The immediate electron acceptor for the enzyme in this species is believed to be ubiquinone. Couples the redox reaction to proton translocation (for every two electrons transferred, four hydrogen ions are translocated across the cytoplasmic membrane), and thus conserves the redox energy in a proton gradient. The polypeptide is NADH-quinone oxidoreductase subunit C (Phenylobacterium zucineum (strain HLK1)).